Reading from the N-terminus, the 240-residue chain is Methylthioribulose-1-phosphate dehydratase (240 aa).

Cys99 lines the substrate pocket. His116 and His118 together coordinate Zn(2+). The active-site Proton donor/acceptor is Glu145. Residue His201 coordinates Zn(2+).

It belongs to the aldolase class II family. MtnB subfamily. Zn(2+) is required as a cofactor.

Its subcellular location is the cytoplasm. The catalysed reaction is 5-(methylsulfanyl)-D-ribulose 1-phosphate = 5-methylsulfanyl-2,3-dioxopentyl phosphate + H2O. The protein operates within amino-acid biosynthesis; L-methionine biosynthesis via salvage pathway; L-methionine from S-methyl-5-thio-alpha-D-ribose 1-phosphate: step 2/6. Catalyzes the dehydration of methylthioribulose-1-phosphate (MTRu-1-P) into 2,3-diketo-5-methylthiopentyl-1-phosphate (DK-MTP-1-P). The chain is Methylthioribulose-1-phosphate dehydratase from Paracoccidioides brasiliensis (strain Pb18).